A 236-amino-acid chain; its full sequence is Ribonuclease HII (236 aa).

Positions 27–219 constitute an RNase H type-2 domain; it reads RILCGVDEAG…VRRALDGAPP (193 aa). A divalent metal cation-binding residues include aspartate 33, glutamate 34, and aspartate 128. The segment at 212–236 is disordered; it reads RALDGAPPPAGDAVPQTDAKTAWAD.

The protein belongs to the RNase HII family. Mn(2+) serves as cofactor. Requires Mg(2+) as cofactor.

It localises to the cytoplasm. The enzyme catalyses Endonucleolytic cleavage to 5'-phosphomonoester.. Functionally, endonuclease that specifically degrades the RNA of RNA-DNA hybrids. The chain is Ribonuclease HII from Ralstonia nicotianae (strain ATCC BAA-1114 / GMI1000) (Ralstonia solanacearum).